A 225-amino-acid polypeptide reads, in one-letter code: NAD(P)H-quinone oxidoreductase subunit K, chloroplastic (225 aa).

[4Fe-4S] cluster-binding residues include C43, C44, C108, and C139.

The protein belongs to the complex I 20 kDa subunit family. NDH is composed of at least 16 different subunits, 5 of which are encoded in the nucleus. [4Fe-4S] cluster serves as cofactor.

Its subcellular location is the plastid. It is found in the chloroplast thylakoid membrane. It catalyses the reaction a plastoquinone + NADH + (n+1) H(+)(in) = a plastoquinol + NAD(+) + n H(+)(out). The catalysed reaction is a plastoquinone + NADPH + (n+1) H(+)(in) = a plastoquinol + NADP(+) + n H(+)(out). In terms of biological role, NDH shuttles electrons from NAD(P)H:plastoquinone, via FMN and iron-sulfur (Fe-S) centers, to quinones in the photosynthetic chain and possibly in a chloroplast respiratory chain. The immediate electron acceptor for the enzyme in this species is believed to be plastoquinone. Couples the redox reaction to proton translocation, and thus conserves the redox energy in a proton gradient. The sequence is that of NAD(P)H-quinone oxidoreductase subunit K, chloroplastic from Manihot esculenta (Cassava).